The chain runs to 1334 residues: Nck-associated protein 5-like (1334 aa).

Disordered stretches follow at residues 1-28, 115-146, 210-234, 266-316, and 349-711; these read MSEA…MEPG, LPQI…APLP, TPWR…GPPQ, GEED…SPDT, and PLNG…MVPS. The mediates interaction with CDK5RAP2 and is required for homodimerization and microtubule bundle formation stretch occupies residues 1–139; that stretch reads MSEAMDQPAG…PASPSLSSTE (139 aa). The stretch at 28 to 106 forms a coiled coil; it reads GTCQELLHRL…NQMLSALFQQ (79 aa). Residues 122 to 132 show a composition bias toward pro residues; it reads PLQPPSEPPAS. Residues 358–372 show a composition bias toward polar residues; sequence GQSSSPDQAPPQLSK. Phosphoserine; by CDK1 occurs at positions 440, 451, 470, and 477. Over residues 468-481 the composition is skewed to low complexity; that stretch reads SPSPGGPQLSPQLP. The (S/T)X(I/L)P motif 1 signature appears at 484-487; it reads SRIP. Serine 493, serine 496, and serine 498 each carry phosphoserine. The span at 519 to 547 shows a compositional bias: polar residues; that stretch reads LPTSPSPCYTTPDSTQLRPPQSALSTTLS. Phosphoserine; by CDK1 occurs at positions 571 and 577. Over residues 638–649 the composition is skewed to polar residues; the sequence is PGNSSKKPSQGS. Threonine 659 carries the post-translational modification Phosphothreonine. The segment at 750 to 1146 is mediates interaction with beta-tubulin and is required for microtubule bundle formation; it reads RVYSSHSMGA…SGTPSKNLPK (397 aa). Serine 767 carries the phosphoserine; by CDK1 modification. Positions 782-884 are disordered; the sequence is LAGALCPQVP…EGLAPHSAIE (103 aa). Residues 810-825 are compositionally biased toward low complexity; sequence SPHSSPTKLPSKSPTK. A (S/T)X(I/L)P motif 2 motif is present at residues 816–819; that stretch reads TKLP. A (S/T)X(I/L)P motif 3; required for interaction with MAPRE1 motif is present at residues 926-929; the sequence is SKLP. Disordered regions lie at residues 931–953, 986–1015, and 1030–1183; these read LNRR…LRRE, KAYL…QGQL, and LNRV…VPGI. Residues 933 to 942 are compositionally biased toward basic and acidic residues; it reads RRTEATKNKE. A coiled-coil region spans residues 956 to 994; sequence MEARKLEAESLNISKLMAKAEDLRRALEEEKAYLSSRAR. Residues 1033–1050 show a composition bias toward basic and acidic residues; it reads VDGKELPSKSWREPKPEY. Low complexity predominate over residues 1079-1090; the sequence is GCGKPPGKPSSE. Polar residues predominate over residues 1110-1122; that stretch reads SHFTACGSLTRTL. Residues 1152–1167 show a composition bias toward pro residues; sequence LDPPPGVPPARPPPLT. Serine 1194 bears the Phosphoserine mark. Residues 1197 to 1206 show a composition bias toward low complexity; sequence AFPALLPAAP. The tract at residues 1197–1334 is disordered; sequence AFPALLPAAP…DSLSSCGSQG (138 aa). Residues 1235–1247 show a composition bias toward polar residues; sequence TFPNTRAAGSSSD. The segment covering 1313-1334 has biased composition (low complexity); the sequence is LETSESLSDSLYDSLSSCGSQG.

In terms of assembly, homodimer. Interacts with CDK5RAP2. Interacts with MAPRE1. Interacts with beta-tubulin. CDK1/Cyclin B-dependent phosphorylation mediates its dissociation from centrosomes during mitosis.

It is found in the cytoplasm. Its subcellular location is the cytoskeleton. The protein resides in the microtubule organizing center. The protein localises to the centrosome. Regulates microtubule organization and stabilization. Promotes microtubule growth and bundling formation and stabilizes microtubules by increasing intense acetylation of microtubules. Both tubulin-binding and homodimer formation are required for NCKAP5L-mediated microtubule bundle formation. The polypeptide is Nck-associated protein 5-like (Homo sapiens (Human)).